A 446-amino-acid chain; its full sequence is Na(+)-translocating NADH-quinone reductase subunit A (446 aa).

Belongs to the NqrA family. In terms of assembly, composed of six subunits; NqrA, NqrB, NqrC, NqrD, NqrE and NqrF.

The catalysed reaction is a ubiquinone + n Na(+)(in) + NADH + H(+) = a ubiquinol + n Na(+)(out) + NAD(+). In terms of biological role, NQR complex catalyzes the reduction of ubiquinone-1 to ubiquinol by two successive reactions, coupled with the transport of Na(+) ions from the cytoplasm to the periplasm. NqrA to NqrE are probably involved in the second step, the conversion of ubisemiquinone to ubiquinol. This Pasteurella multocida (strain Pm70) protein is Na(+)-translocating NADH-quinone reductase subunit A.